Consider the following 161-residue polypeptide: Phosphopantetheine adenylyltransferase (161 aa).

Position 9 (Thr-9) interacts with substrate. ATP-binding positions include 9–10 and His-17; that span reads TF. Residues Lys-41, Leu-73, and Arg-87 each coordinate substrate. ATP contacts are provided by residues 88–90, Glu-98, and 123–129; these read GLR and LSYISST.

Belongs to the bacterial CoaD family. In terms of assembly, homohexamer. Requires Mg(2+) as cofactor.

It localises to the cytoplasm. The catalysed reaction is (R)-4'-phosphopantetheine + ATP + H(+) = 3'-dephospho-CoA + diphosphate. It functions in the pathway cofactor biosynthesis; coenzyme A biosynthesis; CoA from (R)-pantothenate: step 4/5. Its function is as follows. Reversibly transfers an adenylyl group from ATP to 4'-phosphopantetheine, yielding dephospho-CoA (dPCoA) and pyrophosphate. The sequence is that of Phosphopantetheine adenylyltransferase from Hahella chejuensis (strain KCTC 2396).